A 366-amino-acid chain; its full sequence is Phospho-N-acetylmuramoyl-pentapeptide-transferase (366 aa).

Helical transmembrane passes span 27-47, 71-91, 93-113, 134-154, 174-194, 205-225, 245-265, 268-288, 294-314, and 343-363; these read AALF…INSL, TPTM…LLWA, LSNV…AIGF, LGIE…TALA, FMIN…VGAG, GLAI…AYLA, LAVV…FNAP, AIFM…TVAV, IVMA…IIQV, and QVVI…LSTL.

Belongs to the glycosyltransferase 4 family. MraY subfamily. The cofactor is Mg(2+).

Its subcellular location is the cell inner membrane. The enzyme catalyses UDP-N-acetyl-alpha-D-muramoyl-L-alanyl-gamma-D-glutamyl-meso-2,6-diaminopimeloyl-D-alanyl-D-alanine + di-trans,octa-cis-undecaprenyl phosphate = di-trans,octa-cis-undecaprenyl diphospho-N-acetyl-alpha-D-muramoyl-L-alanyl-D-glutamyl-meso-2,6-diaminopimeloyl-D-alanyl-D-alanine + UMP. The protein operates within cell wall biogenesis; peptidoglycan biosynthesis. Catalyzes the initial step of the lipid cycle reactions in the biosynthesis of the cell wall peptidoglycan: transfers peptidoglycan precursor phospho-MurNAc-pentapeptide from UDP-MurNAc-pentapeptide onto the lipid carrier undecaprenyl phosphate, yielding undecaprenyl-pyrophosphoryl-MurNAc-pentapeptide, known as lipid I. The chain is Phospho-N-acetylmuramoyl-pentapeptide-transferase from Rhizobium leguminosarum bv. trifolii (strain WSM2304).